Reading from the N-terminus, the 218-residue chain is GTP cyclohydrolase 1 (218 aa).

3 residues coordinate Zn(2+): cysteine 109, histidine 112, and cysteine 180.

It belongs to the GTP cyclohydrolase I family. In terms of assembly, toroid-shaped homodecamer, composed of two pentamers of five dimers.

It carries out the reaction GTP + H2O = 7,8-dihydroneopterin 3'-triphosphate + formate + H(+). The protein operates within cofactor biosynthesis; 7,8-dihydroneopterin triphosphate biosynthesis; 7,8-dihydroneopterin triphosphate from GTP: step 1/1. This Pasteurella multocida (strain Pm70) protein is GTP cyclohydrolase 1 (folE).